We begin with the raw amino-acid sequence, 121 residues long: Ribonuclease P protein component 4 (121 aa).

Residues C63, C66, C89, and C92 each contribute to the Zn(2+) site.

This sequence belongs to the eukaryotic/archaeal RNase P protein component 4 family. As to quaternary structure, consists of a catalytic RNA component and at least 4-5 protein subunits. Zn(2+) serves as cofactor.

Its subcellular location is the cytoplasm. The enzyme catalyses Endonucleolytic cleavage of RNA, removing 5'-extranucleotides from tRNA precursor.. Part of ribonuclease P, a protein complex that generates mature tRNA molecules by cleaving their 5'-ends. The protein is Ribonuclease P protein component 4 of Methanobrevibacter smithii (strain ATCC 35061 / DSM 861 / OCM 144 / PS).